A 570-amino-acid chain; its full sequence is Putative periplasmic trehalase (570 aa).

An N-terminal signal peptide occupies residues M1–A34. Substrate is bound by residues R159, W166–D167, N203, R212–Q214, R284–E286, and G317. Active-site proton donor/acceptor residues include D319 and E503. E518 lines the substrate pocket. The interval K544–Q570 is disordered. Residues P554–Q570 are compositionally biased toward low complexity.

The protein belongs to the glycosyl hydrolase 37 family. Monomer.

The protein localises to the periplasm. It catalyses the reaction alpha,alpha-trehalose + H2O = alpha-D-glucose + beta-D-glucose. In terms of biological role, provides the cells with the ability to utilize trehalose at high osmolarity by splitting it into glucose molecules that can subsequently be taken up by the phosphotransferase-mediated uptake system. This chain is Putative periplasmic trehalase, found in Salmonella typhi.